We begin with the raw amino-acid sequence, 562 residues long: Nucleoprotein (562 aa).

Residues methionine 53–isoleucine 238 form a binding site for the cap structure m7GTP region. The Mn(2+) site is built by aspartate 381 and glutamate 383. Zn(2+) is bound by residues glutamate 391, cysteine 498, histidine 501, and cysteine 522. Aspartate 526 is a Mn(2+) binding site.

The protein belongs to the arenaviridae nucleocapsid protein family. As to quaternary structure, homomultimerizes to form the nucleocapsid. Binds to viral genomic RNA. Interacts with glycoprotein G2. Interacts with protein Z; this interaction probably directs the encapsidated genome to budding sites. Interacts with protein L; this interaction does not interfere with Z-L interaction. Interacts with host IKBKE (via Protein kinase domain); the interaction inhibits IKBKE kinase activity.

The protein localises to the virion. It is found in the host cytoplasm. Its function is as follows. Encapsidates the genome, protecting it from nucleases. The encapsidated genomic RNA is termed the nucleocapsid (NC). Serves as template for viral transcription and replication. The increased presence of protein N in host cell does not seem to trigger the switch from transcription to replication as observed in other negative strain RNA viruses. Through the interaction with host IKBKE, strongly inhibits the phosphorylation and nuclear translocation of host IRF3, a protein involved in interferon activation pathway, leading to the inhibition of interferon-beta and IRF3-dependent promoters activation. Also encodes a functional 3'-5' exoribonuclease that degrades preferentially dsRNA substrates and thereby participates in the suppression of interferon induction. The protein is Nucleoprotein of Neotoma (wood rats).